The following is a 246-amino-acid chain: UDP-N-acetyl-D-mannosaminuronic acid transferase (246 aa).

This sequence belongs to the glycosyltransferase 26 family.

It catalyses the reaction UDP-N-acetyl-alpha-D-mannosaminouronate + N-acetyl-alpha-D-glucosaminyl-di-trans,octa-cis-undecaprenyl diphosphate = beta-D-ManNAcA-(1-&gt;4)-alpha-D-GlcNAc-di-trans,octa-cis-undecaprenyl diphosphate + UDP + H(+). It functions in the pathway bacterial outer membrane biogenesis; enterobacterial common antigen biosynthesis. Functionally, catalyzes the synthesis of Und-PP-GlcNAc-ManNAcA (Lipid II), the second lipid-linked intermediate involved in enterobacterial common antigen (ECA) synthesis. In Salmonella choleraesuis (strain SC-B67), this protein is UDP-N-acetyl-D-mannosaminuronic acid transferase.